The sequence spans 205 residues: Transcription termination/antitermination protein NusG (205 aa).

The KOW domain occupies 154 to 178; that stretch reads GDHIMVLSGPFKDFEGDVIEVSPER.

It belongs to the NusG family.

Participates in transcription elongation, termination and antitermination. The polypeptide is Transcription termination/antitermination protein NusG (Synechocystis sp. (strain ATCC 27184 / PCC 6803 / Kazusa)).